Here is a 77-residue protein sequence, read N- to C-terminus: MGFGGISIWQLLIILLIVVMLFGTKRLKSLGSDLGDAIKGFRKSMDNGEAEKPAVEEPKGQTIDAQARKVEEPAKKD.

Residues 2 to 22 (GFGGISIWQLLIILLIVVMLF) form a helical membrane-spanning segment. Basic and acidic residues-rich tracts occupy residues 46 to 59 (DNGE…EEPK) and 66 to 77 (QARKVEEPAKKD). Residues 46-77 (DNGEAEKPAVEEPKGQTIDAQARKVEEPAKKD) form a disordered region.

It belongs to the TatA/E family. In terms of assembly, the Tat system comprises two distinct complexes: a TatABC complex, containing multiple copies of TatA, TatB and TatC subunits, and a separate TatA complex, containing only TatA subunits. Substrates initially bind to the TatABC complex, which probably triggers association of the separate TatA complex to form the active translocon.

The protein localises to the cell inner membrane. Part of the twin-arginine translocation (Tat) system that transports large folded proteins containing a characteristic twin-arginine motif in their signal peptide across membranes. TatA could form the protein-conducting channel of the Tat system. The protein is Sec-independent protein translocase protein TatA of Ectopseudomonas mendocina (strain ymp) (Pseudomonas mendocina).